The chain runs to 516 residues: MVIARGLLRSNASSSSSQAINLLKYVTSTGSLQGHTQNLCDASTRHFSSVPSPQYNSTEENGFKGHGMLAPFTAGWQSTDVHPLVIERSEGSYVYDIDGKKYLDSLAGLWCTALGGSEPRLVKAATEQLHKLPFYHSFWNRTTKPSLDLAKELLSMFTAREMGKVFFTNSGSEANDSQVKLVWYYNNALGRPDKKKFIARSKSYHGSTLISASLSGLPALHQKFDLPAPFVLHTDCPHYWRFHLPGETEEEFATRLANNLEELILKEGPETIAAFIAEPVMGAGGVIPPPKTYFEKVQAIVKKYDILFIADEVITAFGRLGTMFGSDMYNIKPDLVSMAKALSSAYVPIGAIMVSPEISDVIHSQSNKLGSFAHGFTYSGHPVACAVAIEALKIYQERNIPDHVKQISPRFQEGVKAFAGSPIVGEIRGVGLILGTEFADNKSPNDPFPAEWGVGAIFGAECQKRGMLVRVAGDNIMMSPPLIMTPDEVEELVSIYGDALKATEERVAELKSKKNN.

The N-terminal 47 residues, 1-47, are a transit peptide targeting the mitochondrion; it reads MVIARGLLRSNASSSSSQAINLLKYVTSTGSLQGHTQNLCDASTRHF. 171-172 serves as a coordination point for pyridoxal 5'-phosphate; sequence GS. Tyr-204 is a binding site for substrate. Asp-311 is a binding site for pyridoxal 5'-phosphate. Lys-340 provides a ligand contact to substrate. The residue at position 340 (Lys-340) is an N6-(pyridoxal phosphate)lysine.

Belongs to the class-III pyridoxal-phosphate-dependent aminotransferase family. Expressed in roots, stems and panicles.

It is found in the mitochondrion. The enzyme catalyses 4-aminobutanoate + pyruvate = succinate semialdehyde + L-alanine. The catalysed reaction is 4-aminobutanoate + glyoxylate = succinate semialdehyde + glycine. Its function is as follows. Transaminase that degrades gamma-amino butyric acid (GABA) and uses pyruvate as amino-group acceptor, but not 2-oxoglutarate. Not involved in the interaction with blast fungus. The chain is Gamma-aminobutyrate transaminase 1, mitochondrial (OSL2) from Oryza sativa subsp. japonica (Rice).